The chain runs to 206 residues: MLPPAIHFYLLPLACILMKSCLAFKNDATEILYSHVVKPVPAHPSSNSTLNQARNGGRHFSNTGLDRNTRVQVGCRELRSTKYISDGQCTSISPLKELVCAGECLPLPVLPNWIGGGYGTKYWSRRSSQEWRCVNDKTRTQRIQLQCQDGSTRTYKITVVTACKCKRYTRQHNESSHNFESMSPAKPVQHHRERKRASKSSKHSMS.

Residues 1–23 form the signal peptide; the sequence is MLPPAIHFYLLPLACILMKSCLA. Asn-47 carries N-linked (GlcNAc...) asparagine glycosylation. 4 disulfides stabilise this stretch: Cys-75/Cys-133, Cys-89/Cys-147, Cys-100/Cys-163, and Cys-104/Cys-165. The CTCK domain occupies 75-170; it reads CRELRSTKYI…TACKCKRYTR (96 aa). Asn-173 is a glycosylation site (N-linked (GlcNAc...) asparagine). Residues 174–206 are disordered; it reads ESSHNFESMSPAKPVQHHRERKRASKSSKHSMS. Residues 188–206 are compositionally biased toward basic residues; that stretch reads VQHHRERKRASKSSKHSMS.

The protein belongs to the sclerostin family. As to quaternary structure, interacts with BMP2, BMP4, BMP6 and BMP7 with high affinity. In terms of tissue distribution, highly expressed in kidney and weakly in lung.

It is found in the secreted. Functionally, may be involved in the onset of endometrial receptivity for implantation/sensitization for the decidual cell reaction Enhances Wnt signaling and inhibits TGF-beta signaling. Directly antagonizes activity of BMP2, BMP4, BMP6 and BMP7 in a dose-dependent manner. In Homo sapiens (Human), this protein is Sclerostin domain-containing protein 1 (SOSTDC1).